The following is a 225-amino-acid chain: PKHD-type hydroxylase YbiX (225 aa).

The region spanning 78 to 177 (TLSTPLFNRY…RVASFMWIQS (100 aa)) is the Fe2OG dioxygenase domain. Residues His96, Asp98, and His158 each contribute to the Fe cation site. Arg168 serves as a coordination point for 2-oxoglutarate.

Fe(2+) serves as cofactor. L-ascorbate is required as a cofactor.

The polypeptide is PKHD-type hydroxylase YbiX (Escherichia coli (strain K12 / DH10B)).